A 602-amino-acid chain; its full sequence is Histone-arginine methyltransferase CARM1 (602 aa).

An SAM-dependent MTase PRMT-type domain is found at 117-424 (AVQYFQFYGY…KKQSYDISIV (308 aa)). 6 residues coordinate S-adenosyl-L-methionine: Q130, R139, G163, E185, E214, and S242. The tract at residues 470 to 602 (TGGAYTMNTG…ITTNTMHYGS (133 aa)) is transactivation domain.

The protein belongs to the class I-like SAM-binding methyltransferase superfamily. Protein arginine N-methyltransferase family. Homodimer.

The protein resides in the nucleus. It localises to the cytoplasm. Its subcellular location is the chromosome. It catalyses the reaction L-arginyl-[protein] + 2 S-adenosyl-L-methionine = N(omega),N(omega)-dimethyl-L-arginyl-[protein] + 2 S-adenosyl-L-homocysteine + 2 H(+). Its function is as follows. Methylates (mono- and asymmetric dimethylation) the guanidino nitrogens of arginyl residues in several proteins involved in DNA packaging, transcription regulation, pre-mRNA splicing, and mRNA stability. Recruited to promoters upon gene activation together with histone acetyltransferases from EP300/P300 and p160 families, methylates histone H3 at 'Arg-17' (H3R17me) and activates transcription via chromatin remodeling. The protein is Histone-arginine methyltransferase CARM1 (carm1) of Xenopus laevis (African clawed frog).